The sequence spans 78 residues: Large ribosomal subunit protein bL28 (78 aa).

The segment at 1–25 (MSRVCQVTGKRPAVGNNRSHAKNAT) is disordered.

This sequence belongs to the bacterial ribosomal protein bL28 family.

This is Large ribosomal subunit protein bL28 from Vibrio cholerae serotype O1 (strain ATCC 39541 / Classical Ogawa 395 / O395).